Consider the following 106-residue polypeptide: Probable glutaredoxin (106 aa).

The Glutaredoxin domain occupies 8–106 (IVQKITGADP…AKYLDVQFTQ (99 aa)). Cysteines 28 and 31 form a disulfide.

The protein belongs to the glutaredoxin family.

The protein localises to the virion. In Acanthamoeba polyphaga mimivirus (APMV), this protein is Probable glutaredoxin.